A 293-amino-acid polypeptide reads, in one-letter code: Aromatic amino acid exporter YddG (293 aa).

At 1-6 (MTRQKA) the chain is on the cytoplasmic side. The region spanning 6–137 (ATLIGLIAIV…LALVGVCWVL (132 aa)) is the EamA 1 domain. The helical transmembrane segment at 7-27 (TLIGLIAIVLWSTMVGLIRGV) threads the bilayer. At 28 to 33 (SEGLGP) the chain is on the periplasmic side. The helical transmembrane segment at 34–54 (VGGAAAIYSLSGLLLIFTVGF) threads the bilayer. Topologically, residues 55–62 (PRIRQIPK) are cytoplasmic. Residues 63–83 (GYLLAGSLLFVSYEICLALSL) traverse the membrane as a helical segment. The Periplasmic segment spans residues 84 to 92 (GYAATHHQA). The helical transmembrane segment at 93–113 (IEVGMVNYLWPSLTILFAILF) threads the bilayer. Over 114-118 (NGQKT) the chain is Cytoplasmic. The helical transmembrane segment at 119 to 139 (NWLIVPGLLLALVGVCWVLGG) threads the bilayer. Topologically, residues 140-155 (DNGLHYDEIINNITTS) are periplasmic. A helical transmembrane segment spans residues 156–176 (PLSYFLAFIGAFIWAAYCTVT). The 128-residue stretch at 158 to 285 (SYFLAFIGAF…ALMVCGGSLL (128 aa)) folds into the EamA 2 domain. At 177–182 (NKYARG) the chain is on the cytoplasmic side. Residues 183–203 (FNGITVFVLLTGASLWVYYFL) traverse the membrane as a helical segment. Topologically, residues 204–218 (TPQPEMIFSTPVMIK) are periplasmic. Residues 219–239 (LISAAFTLGFAYAAWNVGILH) traverse the membrane as a helical segment. Residues 240-243 (GNVT) lie on the Cytoplasmic side of the membrane. A helical transmembrane segment spans residues 244–264 (IMAVGSYFTPVLSSALAAVLL). Over 265–267 (SAP) the chain is Periplasmic. A helical membrane pass occupies residues 268–288 (LSFSFWQGALMVCGGSLLCWL). Topologically, residues 289–293 (ATRRG) are cytoplasmic.

Belongs to the drug/metabolite transporter (DMT) superfamily. Aromatic amino acid/paraquat exporter (ArAA/P-E) (TC 2.A.7.17) family.

Its subcellular location is the cell inner membrane. The catalysed reaction is L-phenylalanine(in) = L-phenylalanine(out). It carries out the reaction L-tyrosine(in) = L-tyrosine(out). The enzyme catalyses L-tryptophan(in) = L-tryptophan(out). It catalyses the reaction L-threonine(in) = L-threonine(out). The catalysed reaction is L-methionine(in) = L-methionine(out). It carries out the reaction L-lysine(in) = L-lysine(out). The enzyme catalyses L-glutamate(out) = L-glutamate(in). It catalyses the reaction L-valine(in) = L-valine(out). The catalysed reaction is L-isoleucine(in) = L-isoleucine(out). Functionally, amino acid transporter with broad substrate specificity. Can transport various amino acids, including phenylalanine, tyrosine, tryptophan, L-threonine, L-methionine, L-lysine, L-glutamate, L-valine and L-isoleucine. Overexpression confers resistance to phenylalanine and increases export of phenylalanine, tyrosine and tryptophan. This chain is Aromatic amino acid exporter YddG (yddG), found in Escherichia coli (strain K12).